We begin with the raw amino-acid sequence, 100 residues long: Integration host factor subunit alpha (100 aa).

It belongs to the bacterial histone-like protein family. In terms of assembly, heterodimer of an alpha and a beta chain.

Its function is as follows. This protein is one of the two subunits of integration host factor, a specific DNA-binding protein that functions in genetic recombination as well as in transcriptional and translational control. The polypeptide is Integration host factor subunit alpha (Alcanivorax borkumensis (strain ATCC 700651 / DSM 11573 / NCIMB 13689 / SK2)).